We begin with the raw amino-acid sequence, 398 residues long: MKILVLNSGSSSLKYQLFDMEKETVMAKGVVQRIGIDNSFLEHENYRGEETTIETDIPDHNRGIQLVIDTLQDEKYGVLNNMEEIDAVGHRVVHGGEKFAESTLITDEVIKQIEEVSELAPLHNPHNLTGIRVCSKLMPGIPQVAVFDTAFHQTMPRKAYVYALPYEYYEKYGIRRYGFHGTSHKYVAERAARLMDKPLEELKIITCHLGNGASVAAIDAGKSVDTSMGLTPLEGLVMGTRCGDIDPAIIPFIMDKENLDIKEVDNVLNKKSGLYGVSGISNDSRDVEEASKDGNERATIALEIFKYRVKKYIGAYTAVMGGVDAVVFTAGIGENAIEMRESIVEELGFLGVKLDRDANNNRGKEIEISTKDSRTKIFVIPTNEELVIARDTARIVES.

Asparagine 7 provides a ligand contact to Mg(2+). Lysine 14 is an ATP binding site. Position 91 (arginine 91) interacts with substrate. Residue aspartate 148 is the Proton donor/acceptor of the active site. ATP contacts are provided by residues 208–212, 283–285, and 331–335; these read HLGNG, DSR, and GIGEN. Mg(2+) is bound at residue glutamate 384.

Belongs to the acetokinase family. In terms of assembly, homodimer. Requires Mg(2+) as cofactor. Mn(2+) serves as cofactor.

The protein resides in the cytoplasm. The enzyme catalyses acetate + ATP = acetyl phosphate + ADP. It functions in the pathway metabolic intermediate biosynthesis; acetyl-CoA biosynthesis; acetyl-CoA from acetate: step 1/2. Catalyzes the formation of acetyl phosphate from acetate and ATP. Can also catalyze the reverse reaction. This Halothermothrix orenii (strain H 168 / OCM 544 / DSM 9562) protein is Acetate kinase.